A 349-amino-acid polypeptide reads, in one-letter code: tRNA pseudouridine synthase D (349 aa).

Residue Phe27 coordinates substrate. Asp80 serves as the catalytic Nucleophile. Asn129 lines the substrate pocket. Residues 155-303 (GVPNYFGAQR…VEAARRAMLL (149 aa)) form the TRUD domain. Phe329 contacts substrate.

The protein belongs to the pseudouridine synthase TruD family.

The catalysed reaction is uridine(13) in tRNA = pseudouridine(13) in tRNA. Responsible for synthesis of pseudouridine from uracil-13 in transfer RNAs. This Escherichia coli O45:K1 (strain S88 / ExPEC) protein is tRNA pseudouridine synthase D.